The sequence spans 153 residues: Neuromedin-S (153 aa).

The signal sequence occupies residues 1 to 26; that stretch reads MKHPLPHYSPILFIYCFCMLQIPSSG. 3 propeptides span residues 27-69, 70-105, and 106-108; these read ASPP…VYKR, FLFHYSRTRKPTHPVSAEFAPVHPLMRLAAKLASRR, and MKR. Asparagine 144 carries the post-translational modification Asparagine amide. Positions 147–153 are excised as a propeptide; sequence YTDNNFQ.

It belongs to the NmU family.

The protein localises to the secreted. Implicated in the regulation of circadian rhythms through autocrine and/or paracrine actions. The protein is Neuromedin-S (Nms) of Mus musculus (Mouse).